The sequence spans 297 residues: Homoserine kinase (297 aa).

82-92 (PLTRGLGSSAS) provides a ligand contact to ATP.

This sequence belongs to the GHMP kinase family. Homoserine kinase subfamily.

The protein localises to the cytoplasm. The enzyme catalyses L-homoserine + ATP = O-phospho-L-homoserine + ADP + H(+). It functions in the pathway amino-acid biosynthesis; L-threonine biosynthesis; L-threonine from L-aspartate: step 4/5. Its function is as follows. Catalyzes the ATP-dependent phosphorylation of L-homoserine to L-homoserine phosphate. The chain is Homoserine kinase from Bacillus cereus (strain ZK / E33L).